The following is a 299-amino-acid chain: ATP phosphoribosyltransferase (299 aa).

The protein belongs to the ATP phosphoribosyltransferase family. Long subfamily. Mg(2+) is required as a cofactor.

Its subcellular location is the cytoplasm. The enzyme catalyses 1-(5-phospho-beta-D-ribosyl)-ATP + diphosphate = 5-phospho-alpha-D-ribose 1-diphosphate + ATP. It functions in the pathway amino-acid biosynthesis; L-histidine biosynthesis; L-histidine from 5-phospho-alpha-D-ribose 1-diphosphate: step 1/9. Its activity is regulated as follows. Feedback inhibited by histidine. Functionally, catalyzes the condensation of ATP and 5-phosphoribose 1-diphosphate to form N'-(5'-phosphoribosyl)-ATP (PR-ATP). Has a crucial role in the pathway because the rate of histidine biosynthesis seems to be controlled primarily by regulation of HisG enzymatic activity. The sequence is that of ATP phosphoribosyltransferase from Shewanella frigidimarina (strain NCIMB 400).